The primary structure comprises 336 residues: Nucleoid-associated protein ECA2747 (336 aa).

Residues 317–336 (KGTPPNLRDQLQRRTSGGKQ) form a disordered region.

The protein belongs to the YejK family.

The protein localises to the cytoplasm. The protein resides in the nucleoid. This Pectobacterium atrosepticum (strain SCRI 1043 / ATCC BAA-672) (Erwinia carotovora subsp. atroseptica) protein is Nucleoid-associated protein ECA2747.